The chain runs to 294 residues: Metallophosphoesterase MPPED2 (294 aa).

Residues Asp-65, His-67, Asp-86, Asn-117, and His-213 each coordinate Mn(2+). Residue 117-118 participates in GMP binding; that stretch reads NH. Residues 225 to 226 and 252 to 255 contribute to the GMP site; these read KE and GIHE. His-254 is a binding site for Mn(2+).

This sequence belongs to the UPF0046 family. Homodimer. It depends on Mn(2+) as a cofactor. Requires Co(2+) as cofactor. Expressed predominantly in fetal brain.

With respect to regulation, inhibited by nmolar levels of AMP and GMP. Its function is as follows. Displays low metallophosphoesterase activity (in vitro). May play a role in the development of the nervous system. This is Metallophosphoesterase MPPED2 (MPPED2) from Homo sapiens (Human).